Here is a 276-residue protein sequence, read N- to C-terminus: MTNPSTINILISNDDGIFALGVRTLANTLAQAGYQVTVVCPDRERSATGHGLTLHRPIRADIVEDFFDPKITAWSCSGTPSDCVKLALSSLIENRPDFIVSGINHGSNLGTDVLYSGTVSAAMEGIIEGIPSIAMSLASFSSRQFQPGADFACGLIQQLYDHPLPDSTLLNVNIPPVTADAIAGVMLTRQGLRRYIENFEKRFDPRGKSYYWLAGELVTEIEQPDHIHLPSHIPTDVQAIQHNYITLTPLQYNLTDVASFEYLQTNQWLERSRDIK.

The a divalent metal cation site is built by aspartate 14, aspartate 15, serine 46, and asparagine 104.

The protein belongs to the SurE nucleotidase family. It depends on a divalent metal cation as a cofactor.

The protein localises to the cytoplasm. The catalysed reaction is a ribonucleoside 5'-phosphate + H2O = a ribonucleoside + phosphate. Functionally, nucleotidase that shows phosphatase activity on nucleoside 5'-monophosphates. This is 5'-nucleotidase SurE from Crocosphaera subtropica (strain ATCC 51142 / BH68) (Cyanothece sp. (strain ATCC 51142)).